The chain runs to 487 residues: Bifunctional protein HldE (487 aa).

Positions 1 to 329 (MLHAVETAFY…GALLTDATYE (329 aa)) are ribokinase. An ATP-binding site is contributed by 204-207 (NRGE). Asp274 is a catalytic residue. Positions 356–487 (FTNGCFDLLH…GIVQRISAQK (132 aa)) are cytidylyltransferase.

It in the N-terminal section; belongs to the carbohydrate kinase PfkB family. This sequence in the C-terminal section; belongs to the cytidylyltransferase family. Homodimer.

The catalysed reaction is D-glycero-beta-D-manno-heptose 7-phosphate + ATP = D-glycero-beta-D-manno-heptose 1,7-bisphosphate + ADP + H(+). It carries out the reaction D-glycero-beta-D-manno-heptose 1-phosphate + ATP + H(+) = ADP-D-glycero-beta-D-manno-heptose + diphosphate. Its pathway is nucleotide-sugar biosynthesis; ADP-L-glycero-beta-D-manno-heptose biosynthesis; ADP-L-glycero-beta-D-manno-heptose from D-glycero-beta-D-manno-heptose 7-phosphate: step 1/4. It functions in the pathway nucleotide-sugar biosynthesis; ADP-L-glycero-beta-D-manno-heptose biosynthesis; ADP-L-glycero-beta-D-manno-heptose from D-glycero-beta-D-manno-heptose 7-phosphate: step 3/4. In terms of biological role, catalyzes the phosphorylation of D-glycero-D-manno-heptose 7-phosphate at the C-1 position to selectively form D-glycero-beta-D-manno-heptose-1,7-bisphosphate. Its function is as follows. Catalyzes the ADP transfer from ATP to D-glycero-beta-D-manno-heptose 1-phosphate, yielding ADP-D-glycero-beta-D-manno-heptose. In Magnetococcus marinus (strain ATCC BAA-1437 / JCM 17883 / MC-1), this protein is Bifunctional protein HldE.